The primary structure comprises 316 residues: ATP synthase gamma chain (316 aa).

Belongs to the ATPase gamma chain family. In terms of assembly, F-type ATPases have 2 components, CF(1) - the catalytic core - and CF(0) - the membrane proton channel. CF(1) has five subunits: alpha(3), beta(3), gamma(1), delta(1), epsilon(1). CF(0) has three main subunits: a, b and c.

It is found in the cellular thylakoid membrane. Functionally, produces ATP from ADP in the presence of a proton gradient across the membrane. The gamma chain is believed to be important in regulating ATPase activity and the flow of protons through the CF(0) complex. The chain is ATP synthase gamma chain from Prochlorococcus marinus (strain MIT 9515).